The chain runs to 272 residues: Putative phosphoenolpyruvate synthase regulatory protein (272 aa).

152–159 (GVSRCGKT) is a binding site for ADP.

Belongs to the pyruvate, phosphate/water dikinase regulatory protein family. PSRP subfamily.

It carries out the reaction [pyruvate, water dikinase] + ADP = [pyruvate, water dikinase]-phosphate + AMP + H(+). The enzyme catalyses [pyruvate, water dikinase]-phosphate + phosphate + H(+) = [pyruvate, water dikinase] + diphosphate. In terms of biological role, bifunctional serine/threonine kinase and phosphorylase involved in the regulation of the phosphoenolpyruvate synthase (PEPS) by catalyzing its phosphorylation/dephosphorylation. This chain is Putative phosphoenolpyruvate synthase regulatory protein, found in Pseudomonas putida (strain GB-1).